The following is a 123-amino-acid chain: Fluoride-specific ion channel FluC (123 aa).

Transmembrane regions (helical) follow at residues 1-21, 32-52, 64-84, and 99-119; these read MLEI…RYLM, ILSL…GLVI, IGLL…SFSY, and FGYT…GIYL. The Na(+) site is built by G74 and T77.

Belongs to the fluoride channel Fluc/FEX (TC 1.A.43) family.

It is found in the cell inner membrane. It carries out the reaction fluoride(in) = fluoride(out). With respect to regulation, na(+) is not transported, but it plays an essential structural role and its presence is essential for fluoride channel function. Its function is as follows. Fluoride-specific ion channel. Important for reducing fluoride concentration in the cell, thus reducing its toxicity. The protein is Fluoride-specific ion channel FluC of Gloeothece citriformis (strain PCC 7424) (Cyanothece sp. (strain PCC 7424)).